The following is a 369-amino-acid chain: MISQEEVPQSTNHSLSFSSLPHEIVVSCLARVSGSYYPKLCLVSKQFRSIILSNEIYKARSHLGTKENRLFVWLKLPTRSYPSWFALWIKPNETLTNDGPIKKQSTGNLLVPLPCSYNYQVLVPSVIVGSETYIVGGYDDALSSSVWFYKNGKIHTLSKSPSMSVARIDAVVVGQYPNIYVMGGCDSDESMNWGEVFNIKTQTWEPLPDPGPEVRGQLVRKMKMQKKNVYVSSEKKDYIYDTEERTWKVTEAVFNFSWCVIEKVRYIYYNKNCWWLDTKSKDWRKIKGLDFLNKFRETDRIEIVNLDGKLVMIWDRFTLSKRNKKIWCAMIALEKCQGCEGIWGKIEWIGDVLMVPLSYSFLDCMVISI.

In terms of domain architecture, F-box spans 14 to 60 (SLSFSSLPHEIVVSCLARVSGSYYPKLCLVSKQFRSIILSNEIYKAR). Kelch repeat units lie at residues 131 to 177 (ETYI…GQYP), 178 to 224 (NIYV…KMKM), and 228 to 274 (NVYV…KNCW).

The sequence is that of Putative F-box/kelch-repeat protein At4g39760 from Arabidopsis thaliana (Mouse-ear cress).